The primary structure comprises 1051 residues: Putative helicase/primase complex protein (1051 aa).

It belongs to the asfivirus F1055L family.

Its function is as follows. May be involved in DNA replication. This is Putative helicase/primase complex protein from Ornithodoros (relapsing fever ticks).